The chain runs to 185 residues: dCTP deaminase (185 aa).

DCTP-binding positions include 107–112 (KSTYAR), 131–133 (TLE), Gln-152, Tyr-166, and Gln-176. Catalysis depends on Glu-133, which acts as the Proton donor/acceptor.

The protein belongs to the dCTP deaminase family. Homotrimer.

The catalysed reaction is dCTP + H2O + H(+) = dUTP + NH4(+). It participates in pyrimidine metabolism; dUMP biosynthesis; dUMP from dCTP (dUTP route): step 1/2. In terms of biological role, catalyzes the deamination of dCTP to dUTP. The chain is dCTP deaminase from Neorickettsia sennetsu (strain ATCC VR-367 / Miyayama) (Ehrlichia sennetsu).